A 616-amino-acid polypeptide reads, in one-letter code: Methionine--tRNA ligase, chloroplastic/mitochondrial (616 aa).

Positions 78–88 (YYVNAPPHMGS) match the 'HIGH' region motif. A 'KMSKS' region motif is present at residues 366 to 370 (KMGKS). Position 369 (K369) interacts with ATP. A compositionally biased stretch (basic and acidic residues) spans 582-593 (LNPEKEEDEKKP). The interval 582–602 (LNPEKEEDEKKPKVGKKTGKA) is disordered.

This sequence belongs to the class-I aminoacyl-tRNA synthetase family.

Its subcellular location is the plastid. The protein resides in the chloroplast. It is found in the mitochondrion. It carries out the reaction tRNA(Met) + L-methionine + ATP = L-methionyl-tRNA(Met) + AMP + diphosphate. In Arabidopsis thaliana (Mouse-ear cress), this protein is Methionine--tRNA ligase, chloroplastic/mitochondrial.